The primary structure comprises 294 residues: Potassium-transporting ATPase subunit beta (294 aa).

The Cytoplasmic portion of the chain corresponds to 1 to 36 (MAALQEKKSCSQRMAEFRQYCWNPDTGQMLGRTPAR). Residues 37–57 (WVWISLYYAAFYVVMTGLFAL) form a helical; Signal-anchor for type II membrane protein membrane-spanning segment. The Extracellular portion of the chain corresponds to 58 to 294 (CIYVLMQTID…KVEFKLTIQK (237 aa)). N-linked (GlcNAc...) asparagine glycosylation is found at Asn99, Asn103, Asn130, Asn146, and Asn161. A disulfide bridge connects residues Cys131 and Cys152. An intrachain disulfide couples Cys162 to Cys178. N-linked (GlcNAc...) asparagine glycosylation is found at Asn193 and Asn225. An immunoglobulin-like region spans residues 194–294 (NTAPRVDCTF…KVEFKLTIQK (101 aa)). A disulfide bridge links Cys201 with Cys266.

It belongs to the X(+)/potassium ATPases subunit beta family. As to quaternary structure, the ATPase pump is composed of two subunits: alpha (catalytic) and beta (regulatory). Interacts with alpha subunit ATP12A; this interaction is required for the formation of a functionally active pump and targeting at the plasma membrane. Interacts (via N-terminus) with alpha subunit ATP4A (via the P-domain). In terms of processing, N-glycosylation is necessary for assembly and functional expression of the pump at the plasma membrane. As to expression, stomach.

Its subcellular location is the apical cell membrane. It localises to the cell membrane. The beta subunit of the gastric H(+)/K(+) ATPase pump which transports H(+) ions in exchange for K(+) ions across the apical membrane of parietal cells. Plays a structural and regulatory role in the assembly and membrane targeting of a functionally active pump. Within a transport cycle, the transfer of a H(+) ion across the membrane is coupled to ATP hydrolysis and is associated with a transient phosphorylation of the alpha subunit that shifts the pump conformation from inward-facing (E1) to outward-facing state (E2). Interacts with the phosphorylation domain of the alpha subunit and functions as a ratchet, stabilizing the lumenal-open E2 conformation and preventing the reverse reaction of the transport cycle. The chain is Potassium-transporting ATPase subunit beta (Atp4b) from Rattus norvegicus (Rat).